We begin with the raw amino-acid sequence, 76 residues long: MISKNQLARINELSKKSKETGLSDAEKTEQKQLREEYLKAFRSSMKNTLKTVKIVDPEGNDVTPEKLKRERDQNLH.

Disordered stretches follow at residues 1 to 31 and 56 to 76; these read MISKNQLARINELSKKSKETGLSDAEKTEQK and DPEGNDVTPEKLKRERDQNLH. 2 stretches are compositionally biased toward basic and acidic residues: residues 12 to 31 and 63 to 76; these read ELSKKSKETGLSDAEKTEQK and TPEKLKRERDQNLH.

Belongs to the UPF0291 family.

The protein resides in the cytoplasm. The sequence is that of UPF0291 protein BPUM_1689 from Bacillus pumilus (strain SAFR-032).